An 84-amino-acid chain; its full sequence is Large ribosomal subunit protein bL27 (84 aa).

The disordered stretch occupies residues 1 to 22 (MAHKKAGGSTRNGRDSESKRLG).

Belongs to the bacterial ribosomal protein bL27 family.

The protein is Large ribosomal subunit protein bL27 of Shewanella sp. (strain MR-4).